The sequence spans 504 residues: MLNRVRSAVAHLVSSSGTSSQRSKSPDLPKAISPPPGALETPKSPGTKSGNEIPAPQKTAETPVSFSRPTFLQLSPGGLRRADDHVGRAVQSPPDTGRRLPWSTGYAEVINAGKSRHNEDQACCEVVYVESRRSITGVSREPSHNQGFSFYYWGLFDGHAGGGAAEMASRLLHRHIREQLKDLVEILQDPLPPPLCLPSTPGTPGVSSPSQLVSPQSWSPQKEVTHDSLVVGAIENAFQLMDEQMARERRGHLVEGGCCALVVVYLLGKMYVANAGDSRAIIVRNGEIIPMSREFTPETERQRLQLLGFLKPELLGSEFTHLEFPRRVQPKELGQRMLYRDQNMTGWAYKKIELEDLRFPLVCGEGKKARVMATIGVTRGLGDHNLKVCSSTLPIKPFLSCFPEVRVYDLTQYEHCPDDVLVLGTDGLWDVTNDSEVAATVDRVLSTYEPNDPSRYTALAQALVLGARGIPRDRGWRLPNNKLGSGDDISVFVIPLGGPGSSYS.

Disordered regions lie at residues methionine 1–tryptophan 102 and proline 194–serine 217. The span at serine 14–serine 23 shows a compositional bias: low complexity. The residue at position 41 (threonine 41) is a Phosphothreonine. Residues threonine 59–glutamine 73 show a composition bias toward polar residues. Serine 65 and serine 75 each carry phosphoserine. The PPM-type phosphatase domain maps to serine 103–leucine 496. Over residues leucine 197–serine 217 the composition is skewed to low complexity.

Belongs to the PP2C family. Interacts with UBE2I/UBC9.

It catalyses the reaction O-phospho-L-seryl-[protein] + H2O = L-seryl-[protein] + phosphate. It carries out the reaction O-phospho-L-threonyl-[protein] + H2O = L-threonyl-[protein] + phosphate. This Rattus norvegicus (Rat) protein is Protein phosphatase 1J (Ppm1j).